The primary structure comprises 124 residues: uncharacterized protein (124 aa).

A signal peptide spans 1 to 22 (MGTSSVLLMIASSLILLEVVMT).

This is an uncharacterized protein from Caenorhabditis elegans.